Here is a 213-residue protein sequence, read N- to C-terminus: Urease accessory protein UreG (213 aa).

Glycine 17 to threonine 24 serves as a coordination point for GTP.

This sequence belongs to the SIMIBI class G3E GTPase family. UreG subfamily. Homodimer. UreD, UreF and UreG form a complex that acts as a GTP-hydrolysis-dependent molecular chaperone, activating the urease apoprotein by helping to assemble the nickel containing metallocenter of UreC. The UreE protein probably delivers the nickel.

Its subcellular location is the cytoplasm. Its function is as follows. Facilitates the functional incorporation of the urease nickel metallocenter. This process requires GTP hydrolysis, probably effectuated by UreG. In Delftia acidovorans (strain DSM 14801 / SPH-1), this protein is Urease accessory protein UreG.